A 295-amino-acid chain; its full sequence is Cyclin-G1 (295 aa).

This sequence belongs to the cyclin family. Cyclin G subfamily. In terms of tissue distribution, high levels in skeletal muscle, ovary, kidney and colon.

The protein resides in the nucleus. In terms of biological role, may play a role in growth regulation. Is associated with G2/M phase arrest in response to DNA damage. May be an intermediate by which p53 mediates its role as an inhibitor of cellular proliferation. This is Cyclin-G1 (CCNG1) from Homo sapiens (Human).